A 1185-amino-acid chain; its full sequence is MISFISGRWWRWKFQNTLAVFLLLICLSTSVAQSCQSSTSCNVVLTDSQGSFTSPCYPNDYPPSQSCNWTIQAPAGFIVQITFLDFELEEAQGCIYDRVVVKTGTSDAKFCGLTANGLTLNSTGNVMEVFFNSDFSVQKKGFHISYKQVAVTLRNQKVTMPKSSKTILRVSNSISIPVLTAFTVCFEIARTAQKATETIFTLSDAAGTSILAFEKTSNGMELFIGASYCSVDNLLTSSDITATMKPLCLTWTKSSGLIGVYFGGHYFSSICSASQIYTLQSGGLLQIAGKGSSSVSVDDQNLDGFIYNFRLWDHAMLSSELSALTCDTVGNVVDWDHSYWTIPGSSTQTDSTLSCSTAITTLSPGTAGCASGLGCPATLTVTITSIATTNIIPTNATTHEDIFYRSTLVVTDEQTPDRDATAIISQWLNQTFQNWMYRVYVDGISLQLITVLSRITTTRQTYLALLVYKNTTDVNLAEVEIESMLRSAPAIGNGLTLDSVTVNLMENCQADEFPVHYRWPESRPTVTQYVPCFPYKDRNASRTCMINRDNYTSFWALPDRGNCTNITSITVSQENAMDVAVQLADISNNGLSKEELTQVVTKVMELVNIAKINATLASTVVTIISNVMVSSEDAQKDASETALKAVDELVQKIEFDGPSLTISSKNLVVGVSALDTTNFNGSTLSAFIATNTTDPQIDFDSEAHNALAVVTLPPTLLQNLSLSQIEKVSRINFMFFGRTGLFQDHQNNGLTLNSYVVASSVGNFTIKNLQDPVRIEIAHLEYQKDPNPQCVFWDFNLQNYSGGCNSDGCKVGSDSNSNRTVCLCNHLTHFGILMDVSRAAELIDEKNNRVLTFITYIGCGISAIFSAATLLTYIAFEKLRRDYPSKILMNLSTSLLFLNMVFLLDGWLASYEIKELCVTVAVFLHFFLLTSFTWMGLESIHMYIALVKVFNTYIRRYILKFCIVGWGVPAAIVGIVLAVSKDSYGKNYYGKGKDGQGTSEFCWILNPVVFYVTCVAYFSIIFLMNVAMFIVVMIQICGRNGKRSNRTLREDILRNLRSVVSLTFLLGMTWGFAFFAWGPVSLAFMYLFTIFNSLQGLFIFVFHCALKENVQKQWRRYLCCGKLRLADNSDWSKTATNNTKKVSSDNLGKSLSSSSFGSTTANWTSKAKATLNPFARHSNADSTLQ.

An N-terminal signal peptide occupies residues 1-32 (MISFISGRWWRWKFQNTLAVFLLLICLSTSVA). Residues 33 to 849 (QSCQSSTSCN…AELIDEKNNR (817 aa)) are Extracellular-facing. Cysteine 41 and cysteine 67 form a disulfide bridge. A CUB domain is found at 41–149 (CNVVLTDSQG…KGFHISYKQV (109 aa)). A mediates interaction with type IV collagen region spans residues 41-354 (CNVVLTDSQG…SSTQTDSTLS (314 aa)). The segment at 41–839 (CNVVLTDSQG…FGILMDVSRA (799 aa)) is inhibits receptor signaling in absence of type IV collagen. N-linked (GlcNAc...) asparagine glycosylation occurs at asparagine 68. Glutamate 89 and aspartate 97 together coordinate Ca(2+). An intrachain disulfide couples cysteine 94 to cysteine 111. Asparagine 121 carries an N-linked (GlcNAc...) asparagine glycan. Ca(2+) is bound by residues aspartate 134, serine 136, and valine 137. In terms of domain architecture, Pentraxin (PTX) spans 154–355 (RNQKVTMPKS…STQTDSTLSC (202 aa)). Cystine bridges form between cysteine 185/cysteine 248, cysteine 229/cysteine 271, and cysteine 369/cysteine 375. Asparagine 395, asparagine 429, asparagine 470, asparagine 539, asparagine 550, asparagine 562, asparagine 565, asparagine 613, asparagine 680, asparagine 691, asparagine 719, asparagine 763, asparagine 799, and asparagine 818 each carry an N-linked (GlcNAc...) asparagine glycan. 2 cysteine pairs are disulfide-bonded: cysteine 508–cysteine 544 and cysteine 532–cysteine 563. Residues 658 to 840 (PSLTISSKNL…GILMDVSRAA (183 aa)) enclose the GAIN-B domain. 2 disulfides stabilise this stretch: cysteine 790–cysteine 822 and cysteine 809–cysteine 824. A GPS region spans residues 790 to 840 (CVFWDFNLQNYSGGCNSDGCKVGSDSNSNRTVCLCNHLTHFGILMDVSRAA). The stachel stretch occupies residues 829-837 (HFGILMDVS). A helical transmembrane segment spans residues 850–870 (VLTFITYIGCGISAIFSAATL). The Cytoplasmic segment spans residues 871-886 (LTYIAFEKLRRDYPSK). A helical transmembrane segment spans residues 887-907 (ILMNLSTSLLFLNMVFLLDGW). Residues 908–915 (LASYEIKE) lie on the Extracellular side of the membrane. A helical transmembrane segment spans residues 916 to 936 (LCVTVAVFLHFFLLTSFTWMG). Over 937-957 (LESIHMYIALVKVFNTYIRRY) the chain is Cytoplasmic. A helical membrane pass occupies residues 958-978 (ILKFCIVGWGVPAAIVGIVLA). Residues 979 to 1013 (VSKDSYGKNYYGKGKDGQGTSEFCWILNPVVFYVT) are Extracellular-facing. Residues 1014-1034 (CVAYFSIIFLMNVAMFIVVMI) traverse the membrane as a helical segment. Residues 1035–1057 (QICGRNGKRSNRTLREDILRNLR) lie on the Cytoplasmic side of the membrane. A helical transmembrane segment spans residues 1058 to 1080 (SVVSLTFLLGMTWGFAFFAWGPV). Residues 1081–1083 (SLA) lie on the Extracellular side of the membrane. Residues 1084–1106 (FMYLFTIFNSLQGLFIFVFHCAL) form a helical membrane-spanning segment. Residue asparagine 1092 coordinates 17alpha-hydroxyprogesterone. Residues 1107 to 1185 (KENVQKQWRR…RHSNADSTLQ (79 aa)) lie on the Cytoplasmic side of the membrane. The interval 1138–1160 (NTKKVSSDNLGKSLSSSSFGSTT) is disordered. The segment covering 1144–1158 (SDNLGKSLSSSSFGS) has biased composition (low complexity).

This sequence belongs to the G-protein coupled receptor 2 family. Adhesion G-protein coupled receptor (ADGR) subfamily. Autoproteolytically processed at the GPS region of the GAIN-B domain; this cleavage modulates receptor activity. As to expression, expressed in Schwann cells of the posterior lateral line nerve and in brain.

It is found in the cell membrane. With respect to regulation, forms a heterodimer of 2 chains generated by proteolytic processing that remain associated through non-covalent interactions mediated by the GAIN-B domain. In the inactivated receptor, the Stachel sequence (also named stalk) is embedded in the GAIN-B domain, where it adopts a beta-strand conformation. On activation, the Stachel moves into the 7 transmembrane region and adopts a twisted hook-shaped configuration that forms contacts within the receptor, leading to coupling of a G-alpha protein, which activates signaling. The cleaved GAIN-B and N-terminal domains can then dissociate from the rest of the receptor. Adhesion G-protein coupled receptor (aGPCR) for steroid hormones, such as progesterone and 17alpha-hydroxyprogesterone (17OHP). Ligand binding causes a conformation change that triggers signaling via guanine nucleotide-binding proteins (G proteins) and modulates the activity of downstream effectors, such as adenylate cyclase. Adgrg6 is coupled to G(i) G alpha proteins and mediates inhibition of adenylate cyclase. Also able to couple to G(q) G proteins. Involved in myelination of the peripheral nervous system: required for differentiation of promyelinating Schwann cells and for normal myelination of axons. G-protein coupled receptor activity can also be activated by type IV collagen, a major constituent of the basement membrane. Also plays a role inner ear development. The chain is Adhesion G-protein coupled receptor G6 (adgrg6) from Danio rerio (Zebrafish).